The primary structure comprises 248 residues: tRNA (guanine-N(1)-)-methyltransferase (248 aa).

Residues Gly113 and 133-138 each bind S-adenosyl-L-methionine; that span reads IGDYVL.

This sequence belongs to the RNA methyltransferase TrmD family. As to quaternary structure, homodimer.

It localises to the cytoplasm. The catalysed reaction is guanosine(37) in tRNA + S-adenosyl-L-methionine = N(1)-methylguanosine(37) in tRNA + S-adenosyl-L-homocysteine + H(+). Specifically methylates guanosine-37 in various tRNAs. The chain is tRNA (guanine-N(1)-)-methyltransferase from Shewanella loihica (strain ATCC BAA-1088 / PV-4).